Consider the following 46-residue polypeptide: Diuretic hormone (46 aa).

The residue at position 46 (isoleucine 46) is an Isoleucine amide.

This sequence belongs to the sauvagine/corticotropin-releasing factor/urotensin I family.

The protein localises to the secreted. Regulation of fluid secretion. Stimulates primary urine secretion by Malpighian tubules and causes a dose-dependent stimulation of cAMP levels in the tubules. This is Diuretic hormone from Locusta migratoria (Migratory locust).